Here is a 119-residue protein sequence, read N- to C-terminus: Ribosome-binding factor A (119 aa).

The protein belongs to the RbfA family. In terms of assembly, monomer. Binds 30S ribosomal subunits, but not 50S ribosomal subunits or 70S ribosomes.

It localises to the cytoplasm. In terms of biological role, one of several proteins that assist in the late maturation steps of the functional core of the 30S ribosomal subunit. Associates with free 30S ribosomal subunits (but not with 30S subunits that are part of 70S ribosomes or polysomes). Required for efficient processing of 16S rRNA. May interact with the 5'-terminal helix region of 16S rRNA. This Wolinella succinogenes (strain ATCC 29543 / DSM 1740 / CCUG 13145 / JCM 31913 / LMG 7466 / NCTC 11488 / FDC 602W) (Vibrio succinogenes) protein is Ribosome-binding factor A.